Reading from the N-terminus, the 211-residue chain is tRNA (pseudouridine(54)-N(1))-methyltransferase (211 aa).

Leu-128, Gly-150, and Cys-183 together coordinate S-adenosyl-L-methionine.

It belongs to the methyltransferase superfamily. TrmY family. As to quaternary structure, homodimer.

Its subcellular location is the cytoplasm. It catalyses the reaction pseudouridine(54) in tRNA + S-adenosyl-L-methionine = N(1)-methylpseudouridine(54) in tRNA + S-adenosyl-L-homocysteine + H(+). Its function is as follows. Specifically catalyzes the N1-methylation of pseudouridine at position 54 (Psi54) in tRNAs. This is tRNA (pseudouridine(54)-N(1))-methyltransferase from Methanosarcina mazei (strain ATCC BAA-159 / DSM 3647 / Goe1 / Go1 / JCM 11833 / OCM 88) (Methanosarcina frisia).